The chain runs to 409 residues: Thiaminase-1 (409 aa).

Positions 1-29 are cleaved as a signal peptide; it reads MSKVKGFIYKPLMVMLALLLVVVSPAGAG. The active-site Nucleophile is the Cys-143. Residue Glu-271 is the Proton acceptor of the active site.

As to quaternary structure, monomer.

It localises to the secreted. It catalyses the reaction pyridine + thiamine = heteropyrithiamine + 5-(2-hydroxyethyl)-4-methylthiazole. In terms of biological role, degrades thiamine by replacing its thiazole moiety with a wide range of nucleophiles. In Paenibacillus thiaminolyticus (Bacillus thiaminolyticus), this protein is Thiaminase-1.